The sequence spans 398 residues: tRNA-specific 2-thiouridylase MnmA (398 aa).

ATP-binding positions include 19–26 (AMSGGVDS) and Leu45. The active-site Nucleophile is Cys113. Cys113 and Cys210 are oxidised to a cystine. Position 137 (Gly137) interacts with ATP. The interaction with tRNA stretch occupies residues 160-162 (RDQ). Cys210 serves as the catalytic Cysteine persulfide intermediate.

This sequence belongs to the MnmA/TRMU family.

Its subcellular location is the cytoplasm. The catalysed reaction is S-sulfanyl-L-cysteinyl-[protein] + uridine(34) in tRNA + AH2 + ATP = 2-thiouridine(34) in tRNA + L-cysteinyl-[protein] + A + AMP + diphosphate + H(+). Its function is as follows. Catalyzes the 2-thiolation of uridine at the wobble position (U34) of tRNA, leading to the formation of s(2)U34. This Rhodopseudomonas palustris (strain BisB5) protein is tRNA-specific 2-thiouridylase MnmA.